Consider the following 119-residue polypeptide: Large ribosomal subunit protein uL18 (119 aa).

The protein belongs to the universal ribosomal protein uL18 family. As to quaternary structure, part of the 50S ribosomal subunit; part of the 5S rRNA/L5/L18/L25 subcomplex. Contacts the 5S and 23S rRNAs.

This is one of the proteins that bind and probably mediate the attachment of the 5S RNA into the large ribosomal subunit, where it forms part of the central protuberance. The protein is Large ribosomal subunit protein uL18 of Clostridium beijerinckii (strain ATCC 51743 / NCIMB 8052) (Clostridium acetobutylicum).